Here is a 341-residue protein sequence, read N- to C-terminus: Protein CbhE (341 aa).

A compositionally biased stretch (acidic residues) spans 287 to 297 (IDEENTSDSSE). Residues 287-341 (IDEENTSDSSEEGTSKNRFRDTLFSNVPDSSSDSENEQEREKKELAGKTPSFRLC) form a disordered region. Positions 323–332 (EQEREKKELA) are enriched in basic and acidic residues.

It localises to the cytoplasm. Its function is as follows. May be involved in the pathogenesis of acute Q fever. This chain is Protein CbhE (cbhE), found in Coxiella burnetii (strain RSA 493 / Nine Mile phase I).